The chain runs to 106 residues: Large ribosomal subunit protein bL21 (106 aa).

Belongs to the bacterial ribosomal protein bL21 family. As to quaternary structure, part of the 50S ribosomal subunit. Contacts protein L20.

This protein binds to 23S rRNA in the presence of protein L20. The protein is Large ribosomal subunit protein bL21 of Dichelobacter nodosus (strain VCS1703A).